Consider the following 144-residue polypeptide: High mobility group B protein 2 (144 aa).

2 stretches are compositionally biased toward basic and acidic residues: residues 1 to 12 and 73 to 94; these read MKGAKSKTETRS and AGDK…KAEK. Disordered stretches follow at residues 1–42, 57–94, and 106–144; these read MKGA…KRPA, KKEN…KAEK, and YNKK…EDDD. A DNA-binding region (HMG box) is located at residues 38 to 107; it reads PKRPASAFFV…EYEKNIKAYN (70 aa). Position 125 is a phosphoserine (serine 125). Residues 127–144 show a composition bias toward acidic residues; that stretch reads VNDEDDAEDGSEEEEDDD.

Belongs to the HMGB family. In terms of tissue distribution, mostly expressed in cotyledons, hypocotyls, leaves, and flowers (excluding pedicels), also present in roots and stems.

The protein localises to the nucleus. Its subcellular location is the cytoplasm. It localises to the cytosol. Functionally, binds preferentially double-stranded DNA. Confers sensitivity to salt and drought stresses. The polypeptide is High mobility group B protein 2 (HMGB2) (Arabidopsis thaliana (Mouse-ear cress)).